We begin with the raw amino-acid sequence, 318 residues long: GTP 3',8-cyclase (318 aa).

The region spanning 4-218 (KHGRNIDYLR…MSRSDLIPIE (215 aa)) is the Radical SAM core domain. A GTP-binding site is contributed by arginine 13. The [4Fe-4S] cluster site is built by cysteine 20 and cysteine 24. Residue tyrosine 26 participates in S-adenosyl-L-methionine binding. Cysteine 27 contributes to the [4Fe-4S] cluster binding site. Arginine 62 provides a ligand contact to GTP. Glycine 66 provides a ligand contact to S-adenosyl-L-methionine. Threonine 93 serves as a coordination point for GTP. Residue serine 117 coordinates S-adenosyl-L-methionine. A GTP-binding site is contributed by lysine 154. Methionine 188 is an S-adenosyl-L-methionine binding site. [4Fe-4S] cluster is bound by residues cysteine 248 and cysteine 251. 253–255 (KIR) contributes to the GTP binding site. Residue cysteine 265 coordinates [4Fe-4S] cluster.

The protein belongs to the radical SAM superfamily. MoaA family. Monomer and homodimer. [4Fe-4S] cluster is required as a cofactor.

The catalysed reaction is GTP + AH2 + S-adenosyl-L-methionine = (8S)-3',8-cyclo-7,8-dihydroguanosine 5'-triphosphate + 5'-deoxyadenosine + L-methionine + A + H(+). It functions in the pathway cofactor biosynthesis; molybdopterin biosynthesis. Catalyzes the cyclization of GTP to (8S)-3',8-cyclo-7,8-dihydroguanosine 5'-triphosphate. The chain is GTP 3',8-cyclase from Clostridium acetobutylicum (strain ATCC 824 / DSM 792 / JCM 1419 / IAM 19013 / LMG 5710 / NBRC 13948 / NRRL B-527 / VKM B-1787 / 2291 / W).